The sequence spans 387 residues: Mannitol-1-phosphate 5-dehydrogenase (387 aa).

Residue A3–G14 coordinates NAD(+).

Belongs to the mannitol dehydrogenase family.

It catalyses the reaction D-mannitol 1-phosphate + NAD(+) = beta-D-fructose 6-phosphate + NADH + H(+). The protein is Mannitol-1-phosphate 5-dehydrogenase of Yersinia pestis bv. Antiqua (strain Antiqua).